The sequence spans 557 residues: 2-succinyl-5-enolpyruvyl-6-hydroxy-3-cyclohexene-1-carboxylate synthase (557 aa).

The protein belongs to the TPP enzyme family. MenD subfamily. In terms of assembly, homodimer. The cofactor is Mg(2+). It depends on Mn(2+) as a cofactor. Thiamine diphosphate serves as cofactor.

The enzyme catalyses isochorismate + 2-oxoglutarate + H(+) = 5-enolpyruvoyl-6-hydroxy-2-succinyl-cyclohex-3-ene-1-carboxylate + CO2. It participates in quinol/quinone metabolism; 1,4-dihydroxy-2-naphthoate biosynthesis; 1,4-dihydroxy-2-naphthoate from chorismate: step 2/7. The protein operates within quinol/quinone metabolism; menaquinone biosynthesis. Its function is as follows. Catalyzes the thiamine diphosphate-dependent decarboxylation of 2-oxoglutarate and the subsequent addition of the resulting succinic semialdehyde-thiamine pyrophosphate anion to isochorismate to yield 2-succinyl-5-enolpyruvyl-6-hydroxy-3-cyclohexene-1-carboxylate (SEPHCHC). This chain is 2-succinyl-5-enolpyruvyl-6-hydroxy-3-cyclohexene-1-carboxylate synthase, found in Staphylococcus aureus (strain Mu3 / ATCC 700698).